We begin with the raw amino-acid sequence, 302 residues long: Catechol 1,2-dioxygenase (302 aa).

Y164, Y198, H222, and H224 together coordinate Fe cation.

The protein belongs to the intradiol ring-cleavage dioxygenase family. The cofactor is Fe(3+).

The catalysed reaction is catechol + O2 = cis,cis-muconate + 2 H(+). It participates in aromatic compound metabolism; beta-ketoadipate pathway; 5-oxo-4,5-dihydro-2-furylacetate from catechol: step 1/3. This is Catechol 1,2-dioxygenase (pheB) from Pseudomonas sp. (strain EST1001).